The following is a 671-amino-acid chain: Bifunctional acetylxylan esterase/xylanase XynS20E (671 aa).

The N-terminal stretch at 1–19 is a signal peptide; it reads MRLGVALSTIAVLLTATSA. The segment at 54-279 is acetylxylan esterase; sequence QGAGRDIHVY…IQDIWDFVSQ (226 aa). Catalysis depends on S152, which acts as the Charge relay system. An N-linked (GlcNAc...) asparagine glycan is attached at N238. The disordered stretch occupies residues 285–328; sequence PVSASGNGGGNTTPTNPSTGGNGNGNGGGNTTPTNPSTGGNGNG. Residues 304–314 are compositionally biased toward gly residues; it reads GGNGNGNGGGN. CBM10 domains lie at 335-374 and 383-422; these read KCSS…CGCG and TCSA…CGCG. N-linked (GlcNAc...) asparagine glycosylation is present at N339. N-linked (GlcNAc...) asparagine glycans are attached at residues N445 and N483. One can recognise a GH11 domain in the interval 461–661; sequence TVTSNKVGDI…NNGGTSGTAD (201 aa). The active-site Nucleophile is the E555. Catalysis depends on E648, which acts as the Proton donor.

This sequence in the N-terminal section; belongs to the axeA family. The protein in the C-terminal section; belongs to the glycosyl hydrolase 11 (cellulase G) family.

It is found in the secreted. The catalysed reaction is Deacetylation of xylans and xylo-oligosaccharides.. The enzyme catalyses Endohydrolysis of (1-&gt;4)-beta-D-xylosidic linkages in xylans.. It participates in glycan degradation; xylan degradation. Functionally, bifunctional acetylxylan esterase/xylanase involved in the hydrolysis of xylan, a major structural heterogeneous polysaccharide found in plant biomass representing the second most abundant polysaccharide in the biosphere, after cellulose. Degrades xylan from acetylxylan, beechwood, birchwood, and oat spelt, and releases acetate from 4-methylumbelliferyl acetate and beta-D-xylose tetraacetate. No activity is observed against carboxy methyl cellulose, beta-glucan, p-nitrophenol acetate, p-nitrophenol laurate, p-nitrophenol myristate, p-nitrophenol, palmitate, or beta-naphthol acetate. This chain is Bifunctional acetylxylan esterase/xylanase XynS20E (xynS20E), found in Neocallimastix patriciarum (Rumen fungus).